Reading from the N-terminus, the 176-residue chain is UBA-like domain-containing protein 1 (176 aa).

2 stretches are compositionally biased toward low complexity: residues 88 to 105 (ESFHSGGSSGSPMATSAT) and 120 to 137 (TPSWPTAASPPGGPQHLQ). The segment at 88-176 (ESFHSGGSSG…RAHPAMEAER (89 aa)) is disordered. The span at 138–150 (PQPPLWTPAPPSP) shows a compositional bias: pro residues. The span at 166–176 (PRAHPAMEAER) shows a compositional bias: basic and acidic residues.

This sequence belongs to the UBALD family.

The sequence is that of UBA-like domain-containing protein 1 (Ubald1) from Rattus norvegicus (Rat).